The sequence spans 203 residues: Recombination protein RecR (203 aa).

The segment at 56–71 (CEVCGNVSDADRCRIC) adopts a C4-type zinc-finger fold. Residues 79–179 (SLVCVVEEPK…TVTRIASGLP (101 aa)) form the Toprim domain.

Belongs to the RecR family.

May play a role in DNA repair. It seems to be involved in an RecBC-independent recombinational process of DNA repair. It may act with RecF and RecO. The chain is Recombination protein RecR from Mycobacterium sp. (strain JLS).